We begin with the raw amino-acid sequence, 215 residues long: Intraflagellar transport protein 43 homolog B (215 aa).

The tract at residues 1 to 107 (MDDHLKLGDS…SDGEGDIPVI (107 aa)) is disordered.

This sequence belongs to the IFT43 family. As to quaternary structure, component of IFT complex A.

Functionally, component of IFT complex A (IFT-A) involved in retrograde ciliary transport along microtubules from the ciliary tip to the base. The polypeptide is Intraflagellar transport protein 43 homolog B (ift43b) (Salmo salar (Atlantic salmon)).